Here is an 823-residue protein sequence, read N- to C-terminus: Leucine--tRNA ligase (823 aa).

Residues 42 to 52 (PYPSGTLHMGH) carry the 'HIGH' region motif. The short motif at 575-579 (KMSKS) is the 'KMSKS' region element. Lys-578 contacts ATP.

This sequence belongs to the class-I aminoacyl-tRNA synthetase family.

The protein resides in the cytoplasm. The catalysed reaction is tRNA(Leu) + L-leucine + ATP = L-leucyl-tRNA(Leu) + AMP + diphosphate. In Legionella pneumophila (strain Corby), this protein is Leucine--tRNA ligase.